The sequence spans 238 residues: RxLR effector protein PITG_14788 (238 aa).

A signal peptide spans 1–23 (MKSLHAVNLVLLLLLACFAPAPA). The short motif at 47–65 (RLLRAHSSGKEEQKEEEER) is the RxLR-dEER element.

This sequence belongs to the RxLR effector family.

It localises to the secreted. The protein localises to the host cytoplasm. It is found in the host cytoskeleton. Its subcellular location is the host nucleus. The protein resides in the host nucleolus. In terms of biological role, effector that enhances P.infestans colonization of Nicotiana benthamiana leaves. This chain is RxLR effector protein PITG_14788, found in Phytophthora infestans (strain T30-4) (Potato late blight agent).